The chain runs to 1680 residues: GRIP and coiled-coil domain-containing protein 2 (1680 aa).

The residue at position 1 (Met-1) is an N-acetylmethionine. Residues Met-1–Ser-14 are compositionally biased toward low complexity. 2 disordered regions span residues Met-1–Thr-23 and Lys-1468–Gly-1522. Residues Lys-31 to Tyr-1614 adopt a coiled-coil conformation. A compositionally biased stretch (polar residues) spans Ser-1469–Lys-1484. Ser-1475 and Ser-1479 each carry phosphoserine. The tract at residues His-1570–Val-1609 is mediates interaction with RAB6A. Residues His-1570–Arg-1680 form a mediates interaction with RAB9A region. The 51-residue stretch at Arg-1605–Val-1655 folds into the GRIP domain.

As to quaternary structure, homodimer. Interacts (via GRIP domain) with RAB6A (preferentially in its GTP-bound form). May interact (RAB6A-dependent) with ARL1; might be involved in GCC2 Golgi localization. Interacts (probably via GRIP domain) with RAB9A (preferentially in its GTP-bound form). Interacts with CLASP1 and CLASP2; recruits both proteins to membranes of the TGN. Interacts with STX16.

The protein localises to the cytoplasm. Its subcellular location is the golgi apparatus. It is found in the trans-Golgi network membrane. In terms of biological role, golgin which probably tethers transport vesicles to the trans-Golgi network (TGN) and regulates vesicular transport between the endosomes and the Golgi. As a RAB9A effector it is involved in recycling of the mannose 6-phosphate receptor from the late endosomes to the TGN. May also play a role in transport between the recycling endosomes and the Golgi. Required for maintenance of the Golgi structure, it is involved in the biogenesis of noncentrosomal, Golgi-associated microtubules through recruitment of CLASP1 and CLASP2. The protein is GRIP and coiled-coil domain-containing protein 2 (Gcc2) of Mus musculus (Mouse).